An 86-amino-acid polypeptide reads, in one-letter code: Protein IDA-LIKE 1 (86 aa).

Residues Met-1–Ala-27 form the signal peptide.

As to expression, expressed in roots.

Its subcellular location is the secreted. The protein localises to the extracellular space. In terms of biological role, involved in an ethylene-independent separation step of floral abscission. May act with RLK5 and HSL2 as ligand-receptor pairs. In Arabidopsis thaliana (Mouse-ear cress), this protein is Protein IDA-LIKE 1 (IDL1).